A 372-amino-acid polypeptide reads, in one-letter code: O-glycoside alpha-1,2-mannosyltransferase homolog 2 (372 aa).

The Cytoplasmic segment spans residues 1–6 (MRISRL). Residues 7–27 (LIRVLLGFVILFITYILFPSI) traverse the membrane as a helical; Signal-anchor for type II membrane protein segment. Residues 28 to 372 (PKALVNTLNV…NLTNEDYDEL (345 aa)) are Lumenal-facing. Catalysis depends on glutamate 271, which acts as the Nucleophile.

It belongs to the glycosyltransferase 15 family.

It is found in the endoplasmic reticulum membrane. Probable mannosyltransferase involved in O-glycosylation of cell wall and secreted proteins. The sequence is that of O-glycoside alpha-1,2-mannosyltransferase homolog 2 (omh2) from Schizosaccharomyces pombe (strain 972 / ATCC 24843) (Fission yeast).